Reading from the N-terminus, the 431-residue chain is Isocitrate lyase (431 aa).

Residues 1 to 21 form a disordered region; it reads MSNVGTPRTAQEIQQDWDTNP. 93-95 serves as a coordination point for substrate; the sequence is SGW. Asp155 provides a ligand contact to Mg(2+). The active-site Proton acceptor is the Cys193. Residues 194–195, Arg230, 315–319, and Thr349 each bind substrate; these read GH and NCSPS.

This sequence belongs to the isocitrate lyase/PEP mutase superfamily. Isocitrate lyase family. As to quaternary structure, homotetramer. It depends on Mg(2+) as a cofactor.

The enzyme catalyses D-threo-isocitrate = glyoxylate + succinate. It participates in carbohydrate metabolism; glyoxylate cycle; (S)-malate from isocitrate: step 1/2. Functionally, involved in the metabolic adaptation in response to environmental changes. Catalyzes the reversible formation of succinate and glyoxylate from isocitrate, a key step of the glyoxylate cycle, which operates as an anaplerotic route for replenishing the tricarboxylic acid cycle during growth on fatty acid substrates. The chain is Isocitrate lyase (aceA) from Corynebacterium efficiens (strain DSM 44549 / YS-314 / AJ 12310 / JCM 11189 / NBRC 100395).